A 414-amino-acid polypeptide reads, in one-letter code: Ferredoxin--NAD(P)(+) reductase fdr (414 aa).

7–38 (DVVIVGAGHGGAQTAIALRQNGFAGTIAIIGA) serves as a coordination point for FAD. Residue 149-177 (KVVIIGGGYIGLEAAAVMAKFGKNVTLIE) coordinates NAD(+).

It belongs to the FAD-dependent oxidoreductase family. As to quaternary structure, monomer. Carbazole 1,9a-dioxygenase complex consists of a terminal oxygenase component CarAa, a ferredoxin reductase component fdr and a ferredoxin component CarAc. It depends on FAD as a cofactor.

The enzyme catalyses 2 reduced [2Fe-2S]-[ferredoxin] + NAD(+) + H(+) = 2 oxidized [2Fe-2S]-[ferredoxin] + NADH. It carries out the reaction 2 reduced [2Fe-2S]-[ferredoxin] + NADP(+) + H(+) = 2 oxidized [2Fe-2S]-[ferredoxin] + NADPH. Part of the multicomponent carbazole 1,9a-dioxygenase (CARDO), that converts carbazole (CAR) into 2-aminobiphenyl-2,3-diol. The sequence is that of Ferredoxin--NAD(P)(+) reductase fdr (fdr) from Sphingomonas sp.